The following is a 358-amino-acid chain: Aminomethyltransferase (358 aa).

It belongs to the GcvT family. As to quaternary structure, the glycine cleavage system is composed of four proteins: P, T, L and H.

It carries out the reaction N(6)-[(R)-S(8)-aminomethyldihydrolipoyl]-L-lysyl-[protein] + (6S)-5,6,7,8-tetrahydrofolate = N(6)-[(R)-dihydrolipoyl]-L-lysyl-[protein] + (6R)-5,10-methylene-5,6,7,8-tetrahydrofolate + NH4(+). Its function is as follows. The glycine cleavage system catalyzes the degradation of glycine. The protein is Aminomethyltransferase of Francisella tularensis subsp. mediasiatica (strain FSC147).